The sequence spans 242 residues: Orotidine 5'-phosphate decarboxylase (242 aa).

Residues Asp-16, Lys-37, 64 to 73, Thr-128, Arg-190, Gln-199, Gly-219, and Arg-220 each bind substrate; that span reads DLKFHDIPNT. Lys-66 acts as the Proton donor in catalysis.

The protein belongs to the OMP decarboxylase family. Type 1 subfamily. Homodimer.

The enzyme catalyses orotidine 5'-phosphate + H(+) = UMP + CO2. The protein operates within pyrimidine metabolism; UMP biosynthesis via de novo pathway; UMP from orotate: step 2/2. Functionally, catalyzes the decarboxylation of orotidine 5'-monophosphate (OMP) to uridine 5'-monophosphate (UMP). This chain is Orotidine 5'-phosphate decarboxylase, found in Prochlorococcus marinus (strain MIT 9312).